Here is a 319-residue protein sequence, read N- to C-terminus: 1-aminocyclopropane-1-carboxylate oxidase 4 (319 aa).

The 101-residue stretch at 153-253 (PNFGTKVSNY…RMSLASFYNP (101 aa)) folds into the Fe2OG dioxygenase domain. The Fe cation site is built by histidine 177, aspartate 179, and histidine 234.

It belongs to the iron/ascorbate-dependent oxidoreductase family. It depends on Fe cation as a cofactor.

It catalyses the reaction 1-aminocyclopropane-1-carboxylate + L-ascorbate + O2 = ethene + L-dehydroascorbate + hydrogen cyanide + CO2 + 2 H2O. Its pathway is alkene biosynthesis; ethylene biosynthesis via S-adenosyl-L-methionine; ethylene from S-adenosyl-L-methionine: step 2/2. This is 1-aminocyclopropane-1-carboxylate oxidase 4 (ACO4) from Petunia hybrida (Petunia).